The following is a 393-amino-acid chain: S-adenosylmethionine synthase (393 aa).

His16 lines the ATP pocket. Mg(2+) is bound at residue Asp18. Glu44 provides a ligand contact to K(+). L-methionine-binding residues include Glu57 and Gln100. Residues 100–110 form a flexible loop region; sequence QSNDIAQGVDH. Residues 167 to 169, 238 to 239, Asp247, 253 to 254, Ala270, and Lys274 each bind ATP; these read DAK, RF, and RK. An L-methionine-binding site is contributed by Asp247. Lys278 lines the L-methionine pocket.

The protein belongs to the AdoMet synthase family. As to quaternary structure, homotetramer; dimer of dimers. The cofactor is Mg(2+). K(+) serves as cofactor.

The protein localises to the cytoplasm. It carries out the reaction L-methionine + ATP + H2O = S-adenosyl-L-methionine + phosphate + diphosphate. The protein operates within amino-acid biosynthesis; S-adenosyl-L-methionine biosynthesis; S-adenosyl-L-methionine from L-methionine: step 1/1. Its function is as follows. Catalyzes the formation of S-adenosylmethionine (AdoMet) from methionine and ATP. The overall synthetic reaction is composed of two sequential steps, AdoMet formation and the subsequent tripolyphosphate hydrolysis which occurs prior to release of AdoMet from the enzyme. In Albidiferax ferrireducens (strain ATCC BAA-621 / DSM 15236 / T118) (Rhodoferax ferrireducens), this protein is S-adenosylmethionine synthase.